The sequence spans 518 residues: Probable protein phosphatase 2C 14 (518 aa).

Low complexity-rich tracts occupy residues 1 to 10 (MVEAAAGRRS) and 86 to 105 (PQRQ…APGA). 2 disordered regions span residues 1 to 31 (MVEA…QQHQ) and 86 to 108 (PQRQ…ADGR). In terms of domain architecture, PPM-type phosphatase spans 129-437 (VASLYTLQGK…DDCAVVCLFL (309 aa)). Mn(2+)-binding residues include Asp165 and Gly166. A disordered region spans residues 192 to 222 (TDEGRQTSTSSIKSNGDETGSPGNMGRDAEQ). A compositionally biased stretch (polar residues) spans 197 to 213 (QTSTSSIKSNGDETGSP). Residues Asp382 and Asp428 each coordinate Mn(2+).

It belongs to the PP2C family. Mg(2+) serves as cofactor. It depends on Mn(2+) as a cofactor.

The enzyme catalyses O-phospho-L-seryl-[protein] + H2O = L-seryl-[protein] + phosphate. It catalyses the reaction O-phospho-L-threonyl-[protein] + H2O = L-threonyl-[protein] + phosphate. This Oryza sativa subsp. japonica (Rice) protein is Probable protein phosphatase 2C 14.